The sequence spans 70 residues: DNA-directed RNA polymerase subunit epsilon (70 aa).

The protein belongs to the RNA polymerase subunit epsilon family. RNAP is composed of a core of 2 alpha, a beta and a beta' subunit. The core is associated with a delta subunit, and at least one of epsilon or omega. When a sigma factor is associated with the core the holoenzyme is formed, which can initiate transcription.

The enzyme catalyses RNA(n) + a ribonucleoside 5'-triphosphate = RNA(n+1) + diphosphate. A non-essential component of RNA polymerase (RNAP). The polypeptide is DNA-directed RNA polymerase subunit epsilon (Bacillus cytotoxicus (strain DSM 22905 / CIP 110041 / 391-98 / NVH 391-98)).